The following is a 236-amino-acid chain: Small ribosomal subunit protein uS2c (236 aa).

This sequence belongs to the universal ribosomal protein uS2 family.

The protein localises to the plastid. Its subcellular location is the chloroplast. The chain is Small ribosomal subunit protein uS2c (rps2) from Manihot esculenta (Cassava).